The primary structure comprises 264 residues: Apolipoprotein A-I (264 aa).

Positions 1–18 are cleaved as a signal peptide; the sequence is MKAVLLVVAALFLAGSQA. Tandem repeats lie at residues 67-88 and 89-110. Residues 67-264 form a 10 X approximate tandem repeats region; it reads LRLSDNWDTL…DQASKQLAAQ (198 aa). One copy of the 3; half-length repeat lies at 111-121; the sequence is EDLQDVKHKVQ. Tandem repeats lie at residues 122–143, 144–165, and 166–187. One copy of the 7; truncated repeat lies at 188-207; it reads PFSEEMRQRLAKRLEELKDS. Met193 bears the Methionine sulfoxide mark. Repeat 8 spans residues 208–229; it reads ATLADYHAKASEHLKMLGEKAK. The 9; half-length repeat unit spans residues 230–240; it reads PALEDLRQGLL. Copy 10 of the repeat occupies 241–264; the sequence is PVLENLKASILSSIDQASKQLAAQ.

The protein belongs to the apolipoprotein A1/A4/E family. In terms of assembly, homodimer. Interacts with APOA1BP and CLU. Component of a sperm activating protein complex (SPAP), consisting of APOA1, an immunoglobulin heavy chain, an immunoglobulin light chain and albumin. Interacts with NDRG1. Interacts with SCGB3A2. Interacts with NAXE and YJEFN3. Glycosylated. Post-translationally, palmitoylated. In terms of processing, phosphorylation sites are present in the extracellular medium.

It localises to the secreted. In terms of biological role, participates in the reverse transport of cholesterol from tissues to the liver for excretion by promoting cholesterol efflux from tissues and by acting as a cofactor for the lecithin cholesterol acyltransferase (LCAT). As part of the SPAP complex, activates spermatozoa motility. The protein is Apolipoprotein A-I (APOA1) of Cavia aperea (Brazilian guinea pig).